Reading from the N-terminus, the 232-residue chain is Small heat shock protein, chloroplastic (232 aa).

Residues 1 to 25 (MAQSVSLSTIASPILSQKPGSSVKS) show a composition bias toward polar residues. Disordered regions lie at residues 1–35 (MAQS…SFPL) and 48–81 (RAQA…RKPR). A chloroplast-targeting transit peptide spans 1–46 (MAQSVSLSTIASPILSQKPGSSVKSTPPCMASFPLRRQLPRLGLRN). Residues 55-78 (GDNKDNSVEVHRVNKDDQGTAVER) show a composition bias toward basic and acidic residues. In terms of domain architecture, sHSP spans 124 to 232 (IGGGEIRVPW…ERTVIDVQIQ (109 aa)).

This sequence belongs to the small heat shock protein (HSP20) family.

Its subcellular location is the plastid. It is found in the chloroplast. In Pisum sativum (Garden pea), this protein is Small heat shock protein, chloroplastic (HSP21).